Here is a 105-residue protein sequence, read N- to C-terminus: Nitrogenase-stabilizing/protective protein NifW 2 (105 aa).

Belongs to the NifW family.

May protect the nitrogenase Fe-Mo protein from oxidative damage. This Trichormus variabilis (strain ATCC 29413 / PCC 7937) (Anabaena variabilis) protein is Nitrogenase-stabilizing/protective protein NifW 2 (nifW2).